A 305-amino-acid polypeptide reads, in one-letter code: Ribosomal RNA small subunit methyltransferase H (305 aa).

S-adenosyl-L-methionine is bound by residues Gly-33–His-35, Asp-52, Asp-97, and Gln-104.

The protein belongs to the methyltransferase superfamily. RsmH family.

It is found in the cytoplasm. The enzyme catalyses cytidine(1402) in 16S rRNA + S-adenosyl-L-methionine = N(4)-methylcytidine(1402) in 16S rRNA + S-adenosyl-L-homocysteine + H(+). Functionally, specifically methylates the N4 position of cytidine in position 1402 (C1402) of 16S rRNA. The polypeptide is Ribosomal RNA small subunit methyltransferase H (Campylobacter lari (strain RM2100 / D67 / ATCC BAA-1060)).